The sequence spans 96 residues: Cytoplasmic envelopment protein 3 (96 aa).

Gly2 carries the N-myristoyl glycine; by host lipid modification. Positions 18 to 19 match the Di-leucine-like internalization motif motif; it reads LI. The tract at residues 37-43 is asp/Glu-rich (acidic); the sequence is DIESEEE. Ser40 bears the Phosphoserine mark. Positions 57-96 are disordered; sequence RAPGRQRLRSSDPPSRHTHRRTPGGACPATQFPPPMSDSE. Over residues 87-96 the composition is skewed to pro residues; that stretch reads QFPPPMSDSE.

This sequence belongs to the herpesviridae cytoplasmic envelopment protein 3 family. As to quaternary structure, interacts with cytoplasmic envelopment protein 2; this interaction is essential for the proper localization of each protein to the assembly complex and thus for the production of infectious virus. Interacts with gE (via C-terminus). Interacts with gD (via C-terminus). Interacts with UL56. Post-translationally, myristoylation and palmitoylation (probably on one or more of the nearby cysteines at the N-terminus) enable membrane-binding and Golgi apparatus-specific targeting and are essential for efficient packaging. In terms of processing, phosphorylated. Phosphorylation does not seem to be required for recycling to the host Golgi apparatus. Packaging is selective for underphosphorylated forms.

The protein localises to the virion tegument. Its subcellular location is the virion membrane. It is found in the host cell membrane. The protein resides in the host Golgi apparatus membrane. Functionally, plays an important role in the cytoplasmic envelopment of tegument proteins and capsids during the assembly and egress processes. Also participates in viral entry at the fusion step probably by regulating the core fusion machinery. The sequence is that of Cytoplasmic envelopment protein 3 from Human herpesvirus 1 (strain KOS) (HHV-1).